A 342-amino-acid chain; its full sequence is DNA primase small subunit PriS (342 aa).

Active-site residues include Asp-97, Asp-99, and Asp-236.

The protein belongs to the eukaryotic-type primase small subunit family. In terms of assembly, heterodimer of a small subunit (PriS) and a large subunit (PriL). Mg(2+) is required as a cofactor. It depends on Mn(2+) as a cofactor.

In terms of biological role, catalytic subunit of DNA primase, an RNA polymerase that catalyzes the synthesis of short RNA molecules used as primers for DNA polymerase during DNA replication. The small subunit contains the primase catalytic core and has DNA synthesis activity on its own. Binding to the large subunit stabilizes and modulates the activity, increasing the rate of DNA synthesis while decreasing the length of the DNA fragments, and conferring RNA synthesis capability. The DNA polymerase activity may enable DNA primase to also catalyze primer extension after primer synthesis. May also play a role in DNA repair. The sequence is that of DNA primase small subunit PriS from Aeropyrum pernix (strain ATCC 700893 / DSM 11879 / JCM 9820 / NBRC 100138 / K1).